The primary structure comprises 286 residues: Protein NipSnap homolog 2 (286 aa).

Residues 1–40 constitute a mitochondrion transit peptide; sequence MATRVLHSSCSGLYRAAGPARGKGHATAVIRSLSASHNRP.

This sequence belongs to the NipSnap family.

Its subcellular location is the mitochondrion matrix. In terms of biological role, protein involved in mitophagy. Accumulates on the mitochondria surface in response to mitochondrial depolarization and acts as a 'eat me' signal by recruiting proteins involved in selective autophagy. The chain is Protein NipSnap homolog 2 (nipsnap2) from Danio rerio (Zebrafish).